Here is a 175-residue protein sequence, read N- to C-terminus: Small ribosomal subunit protein uS5 (175 aa).

The S5 DRBM domain maps to 11–74 (LSEVLVDVNR…QAAKKRMMKV (64 aa)).

It belongs to the universal ribosomal protein uS5 family. In terms of assembly, part of the 30S ribosomal subunit. Contacts proteins S4 and S8.

Functionally, with S4 and S12 plays an important role in translational accuracy. In terms of biological role, located at the back of the 30S subunit body where it stabilizes the conformation of the head with respect to the body. This chain is Small ribosomal subunit protein uS5, found in Rickettsia typhi (strain ATCC VR-144 / Wilmington).